We begin with the raw amino-acid sequence, 504 residues long: Lysine--tRNA ligase (504 aa).

The 'HIGH' region signature appears at 23-31; it reads PSGPIHIGN.

The protein belongs to the class-I aminoacyl-tRNA synthetase family.

It localises to the cytoplasm. The enzyme catalyses tRNA(Lys) + L-lysine + ATP = L-lysyl-tRNA(Lys) + AMP + diphosphate. This is Lysine--tRNA ligase from Picrophilus torridus (strain ATCC 700027 / DSM 9790 / JCM 10055 / NBRC 100828 / KAW 2/3).